Reading from the N-terminus, the 278-residue chain is Undecaprenyl-diphosphatase (278 aa).

Transmembrane regions (helical) follow at residues 14–34 (GTTEFLPISSSAHLIVLPWLF), 40–60 (GLAFNVALHLGTLSAVLAYFW), 89–109 (WAVIIGSLPAGLAGFFLNDVI), 121–141 (TAIVFTSLLLIVLGFVLWLAE), 153–173 (LGLRDGLVVGLAQALALLPGV), 196–216 (FSFILGIPAIAGAGLLETLKL), 227–247 (VLFVTGVASAAITGFLAIAFL), and 257–277 (SIFIVYRIALGLVLLLVVSFA).

This sequence belongs to the UppP family.

It is found in the cell membrane. The enzyme catalyses di-trans,octa-cis-undecaprenyl diphosphate + H2O = di-trans,octa-cis-undecaprenyl phosphate + phosphate + H(+). Catalyzes the dephosphorylation of undecaprenyl diphosphate (UPP). Confers resistance to bacitracin. The chain is Undecaprenyl-diphosphatase from Thermomicrobium roseum (strain ATCC 27502 / DSM 5159 / P-2).